Consider the following 363-residue polypeptide: UDP-N-acetylglucosamine--N-acetylmuramyl-(pentapeptide) pyrophosphoryl-undecaprenol N-acetylglucosamine transferase (363 aa).

Residues 10 to 12 (TGG), Asn-124, Ser-195, Ile-250, and Gln-295 contribute to the UDP-N-acetyl-alpha-D-glucosamine site.

Belongs to the glycosyltransferase 28 family. MurG subfamily.

The protein resides in the cell membrane. The catalysed reaction is di-trans,octa-cis-undecaprenyl diphospho-N-acetyl-alpha-D-muramoyl-L-alanyl-D-glutamyl-meso-2,6-diaminopimeloyl-D-alanyl-D-alanine + UDP-N-acetyl-alpha-D-glucosamine = di-trans,octa-cis-undecaprenyl diphospho-[N-acetyl-alpha-D-glucosaminyl-(1-&gt;4)]-N-acetyl-alpha-D-muramoyl-L-alanyl-D-glutamyl-meso-2,6-diaminopimeloyl-D-alanyl-D-alanine + UDP + H(+). It functions in the pathway cell wall biogenesis; peptidoglycan biosynthesis. Its function is as follows. Cell wall formation. Catalyzes the transfer of a GlcNAc subunit on undecaprenyl-pyrophosphoryl-MurNAc-pentapeptide (lipid intermediate I) to form undecaprenyl-pyrophosphoryl-MurNAc-(pentapeptide)GlcNAc (lipid intermediate II). This Listeria monocytogenes serotype 4b (strain CLIP80459) protein is UDP-N-acetylglucosamine--N-acetylmuramyl-(pentapeptide) pyrophosphoryl-undecaprenol N-acetylglucosamine transferase.